The chain runs to 139 residues: ATP synthase epsilon chain (139 aa).

This sequence belongs to the ATPase epsilon chain family. In terms of assembly, F-type ATPases have 2 components, CF(1) - the catalytic core - and CF(0) - the membrane proton channel. CF(1) has five subunits: alpha(3), beta(3), gamma(1), delta(1), epsilon(1). CF(0) has three main subunits: a, b and c.

It localises to the cell membrane. In terms of biological role, produces ATP from ADP in the presence of a proton gradient across the membrane. The chain is ATP synthase epsilon chain from Pediococcus pentosaceus (strain ATCC 25745 / CCUG 21536 / LMG 10740 / 183-1w).